A 363-amino-acid chain; its full sequence is MVRSLVRRLLGRSQNNGTAAPALELPPEDSRARARAMVMGLQDEICAGLESLDGEGTFVEESWERPEGGGGRSRVMREGLVFEQGGVNFSEVQGQELPPSILKQRPEAKGHPWFATGTSMVLHPHNPYIPTVHLNYRYFEAGPVWWFGGGADLTPYYPFLEDARHFHRTHQAACDSVHPDLHKVFKPWCDEYFFLKHRGETRGVGGIFYDYQDSSGVLYKGQDPSGPAAGVSAQLGARPLGWEQLFALGQANGRAFLPSYAPIVEKRHPMAYGDRERQFQLYRRGRYVEFNLVWDRGTIFGLQTNGRTESILMSLPPLVRWEYGYKAEAGSREALLTELFTKPQDWLGDASLEDRCRPHGAIN.

Ser-119 serves as a coordination point for substrate. 2 residues coordinate a divalent metal cation: His-123 and His-133. His-133 functions as the Proton donor in the catalytic mechanism. 135–137 (NYR) provides a ligand contact to substrate. The a divalent metal cation site is built by His-167 and His-197. The interval 287–322 (YVEFNLVWDRGTIFGLQTNGRTESILMSLPPLVRWE) is important for dimerization.

The protein belongs to the aerobic coproporphyrinogen-III oxidase family. In terms of assembly, homodimer. It depends on a divalent metal cation as a cofactor.

The protein resides in the cytoplasm. It catalyses the reaction coproporphyrinogen III + O2 + 2 H(+) = protoporphyrinogen IX + 2 CO2 + 2 H2O. Its pathway is porphyrin-containing compound metabolism; protoporphyrin-IX biosynthesis; protoporphyrinogen-IX from coproporphyrinogen-III (O2 route): step 1/1. Functionally, involved in the heme and chlorophyll biosynthesis. Catalyzes the aerobic oxidative decarboxylation of propionate groups of rings A and B of coproporphyrinogen-III to yield the vinyl groups in protoporphyrinogen-IX. The sequence is that of Oxygen-dependent coproporphyrinogen-III oxidase from Parasynechococcus marenigrum (strain WH8102).